The sequence spans 102 residues: Large ribosomal subunit protein bL21 (102 aa).

Belongs to the bacterial ribosomal protein bL21 family. In terms of assembly, part of the 50S ribosomal subunit. Contacts protein L20.

Functionally, this protein binds to 23S rRNA in the presence of protein L20. The chain is Large ribosomal subunit protein bL21 from Lawsonia intracellularis.